A 279-amino-acid polypeptide reads, in one-letter code: 4-diphosphocytidyl-2-C-methyl-D-erythritol kinase (279 aa).

Residue lysine 11 is part of the active site. Residue 95-105 (PVAAGLGGGSS) participates in ATP binding. The active site involves aspartate 137.

Belongs to the GHMP kinase family. IspE subfamily.

The catalysed reaction is 4-CDP-2-C-methyl-D-erythritol + ATP = 4-CDP-2-C-methyl-D-erythritol 2-phosphate + ADP + H(+). It participates in isoprenoid biosynthesis; isopentenyl diphosphate biosynthesis via DXP pathway; isopentenyl diphosphate from 1-deoxy-D-xylulose 5-phosphate: step 3/6. Functionally, catalyzes the phosphorylation of the position 2 hydroxy group of 4-diphosphocytidyl-2C-methyl-D-erythritol. This is 4-diphosphocytidyl-2-C-methyl-D-erythritol kinase from Geobacter sulfurreducens (strain ATCC 51573 / DSM 12127 / PCA).